The primary structure comprises 71 residues: Protein CYSTEINE-RICH TRANSMEMBRANE MODULE 4 (71 aa).

Polar residues predominate over residues 1 to 12 (MSQYSQNQSSGA). The segment at 1-31 (MSQYSQNQSSGAYPTPPVSTGPYMTPPPLGY) is disordered. The span at 14-30 (PTPPVSTGPYMTPPPLG) shows a compositional bias: pro residues. A helical transmembrane segment spans residues 48-64 (SKGDGFLKGCLAAMCCC).

Belongs to the CYSTM1 family. As to quaternary structure, heterodimers. Interacts with CYSTM6, CYSTM7, CYSTM12 and WIH1/CYSTM13. In terms of tissue distribution, mostly expressed in roots, stems, rosette leaves and siliques and, to a lower extent, in flowers and cauline leaves.

Its subcellular location is the cell membrane. It is found in the cytoplasm. In terms of biological role, involved in resistance to abiotic stress. The chain is Protein CYSTEINE-RICH TRANSMEMBRANE MODULE 4 from Arabidopsis thaliana (Mouse-ear cress).